A 193-amino-acid polypeptide reads, in one-letter code: Imidazoleglycerol-phosphate dehydratase (193 aa).

The protein belongs to the imidazoleglycerol-phosphate dehydratase family.

Its subcellular location is the cytoplasm. It catalyses the reaction D-erythro-1-(imidazol-4-yl)glycerol 3-phosphate = 3-(imidazol-4-yl)-2-oxopropyl phosphate + H2O. Its pathway is amino-acid biosynthesis; L-histidine biosynthesis; L-histidine from 5-phospho-alpha-D-ribose 1-diphosphate: step 6/9. This Saccharolobus solfataricus (strain ATCC 35092 / DSM 1617 / JCM 11322 / P2) (Sulfolobus solfataricus) protein is Imidazoleglycerol-phosphate dehydratase (hisB).